We begin with the raw amino-acid sequence, 689 residues long: DNA-directed RNA polymerase subunit beta' (689 aa).

4 residues coordinate Zn(2+): C76, C78, C94, and C97. The Mg(2+) site is built by D496, D498, and D500.

It belongs to the RNA polymerase beta' chain family. RpoC1 subfamily. In plastids the minimal PEP RNA polymerase catalytic core is composed of four subunits: alpha, beta, beta', and beta''. When a (nuclear-encoded) sigma factor is associated with the core the holoenzyme is formed, which can initiate transcription. Mg(2+) serves as cofactor. The cofactor is Zn(2+).

It is found in the plastid. It localises to the chloroplast. It carries out the reaction RNA(n) + a ribonucleoside 5'-triphosphate = RNA(n+1) + diphosphate. Its function is as follows. DNA-dependent RNA polymerase catalyzes the transcription of DNA into RNA using the four ribonucleoside triphosphates as substrates. This Illicium oligandrum (Star anise) protein is DNA-directed RNA polymerase subunit beta'.